We begin with the raw amino-acid sequence, 628 residues long: Leucine-rich repeat and fibronectin type-III domain-containing protein 3 (628 aa).

The N-terminal stretch at 1–16 (MAILPLLLCLLPLAPA) is a signal peptide. Over 17–539 (SSPPQSATPS…PHAPFLGGTM (523 aa)) the chain is Extracellular. The LRRNT domain occupies 19–59 (PPQSATPSPCPRRCRCQTQSLPLSVLCPGAGLLFVPPSLDR). LRR repeat units lie at residues 60–83 (RAAELRLADNFIASVRRRDLANMT), 84–105 (GLLHLSLSRNTIRHVAAGAFAD), 108–129 (ALRALHLDGNRLTSLGEGQLRG), 132–153 (NLRHLILSNNQLAALAAGALDD), 157–178 (TLEDLDLSYNNLEQLPWEALGR), 181–202 (NVNTLGLDHNLLASVPAGAFSR), and 205–226 (KLARLDMTSNRLTTIPPDPLFS). N-linked (GlcNAc...) asparagine glycosylation is present at Asn-81. Positions 249–295 (NPLHCNCELVWLRRLAREDDLEACASPPALGGRYFWAVGEEEFVCEP) constitute an LRRCT domain. The region spanning 295–382 (PPVVTHRSPP…GEATAAVELT (88 aa)) is the Ig-like domain. A disulfide bridge links Cys-317 with Cys-366. Residues Asn-339, Asn-348, and Asn-393 are each glycosylated (N-linked (GlcNAc...) asparagine). Residues 382-430 (TVGPPPPPQLANSTSCDPPRDGDPDALTPPSAASASAKVADTGPPTDRG) are disordered. Residues 406–422 (DALTPPSAASASAKVAD) are compositionally biased toward low complexity. One can recognise a Fibronectin type-III domain in the interval 425–523 (PPTDRGVQVT…GCARFSTEPA (99 aa)). Asn-462 is a glycosylation site (N-linked (GlcNAc...) asparagine). Residues 540–560 (IIALGGVIVASVLVFIFVLLM) form a helical membrane-spanning segment. The Cytoplasmic portion of the chain corresponds to 561 to 628 (RYKVHGGQPP…WGPGHEPVGP (68 aa)).

It belongs to the LRFN family. Can form heteromeric complexes with LRFN1, LRFN2, LRFN4 and LRFN5. Able to form homomeric complexes across cell junctions, between adjacent cells. Does not interact with DLG4. Post-translationally, N-glycosylated.

It is found in the cell membrane. It localises to the cell projection. The protein resides in the axon. Its subcellular location is the dendrite. The protein localises to the synapse. It is found in the presynaptic cell membrane. It localises to the postsynaptic cell membrane. In terms of biological role, cell adhesion molecule that mediates homophilic cell-cell adhesion in a Ca(2+)-independent manner. Promotes neurite outgrowth in hippocampal neurons. This is Leucine-rich repeat and fibronectin type-III domain-containing protein 3 (LRFN3) from Homo sapiens (Human).